A 305-amino-acid chain; its full sequence is UDP-N-acetylenolpyruvoylglucosamine reductase (305 aa).

The 166-residue stretch at 37-202 (GIGGPARFLA…LSVTFNLEPK (166 aa)) folds into the FAD-binding PCMH-type domain. Residue Arg183 is part of the active site.

Belongs to the MurB family. FAD is required as a cofactor.

The protein localises to the cytoplasm. The enzyme catalyses UDP-N-acetyl-alpha-D-muramate + NADP(+) = UDP-N-acetyl-3-O-(1-carboxyvinyl)-alpha-D-glucosamine + NADPH + H(+). It participates in cell wall biogenesis; peptidoglycan biosynthesis. Functionally, cell wall formation. This chain is UDP-N-acetylenolpyruvoylglucosamine reductase, found in Rhodopirellula baltica (strain DSM 10527 / NCIMB 13988 / SH1).